We begin with the raw amino-acid sequence, 274 residues long: Cell division protein FtsQ (274 aa).

The disordered stretch occupies residues 1–24 (MRDLHAKKQRVPHNRVKKPPKERK). Residues 1-33 (MRDLHAKKQRVPHNRVKKPPKERKPINWGPILK) are Cytoplasmic-facing. Positions 7-21 (KKQRVPHNRVKKPPK) are enriched in basic residues. The chain crosses the membrane as a helical span at residues 34–56 (FASRGFGGAALCAGLGFGGWQLY). The Periplasmic portion of the chain corresponds to 57 to 274 (NLVSRTTLLR…YADKIIVKKV (218 aa)). The POTRA domain maps to 65–133 (LRLEAIEVSP…HTLSITVSER (69 aa)).

This sequence belongs to the FtsQ/DivIB family. FtsQ subfamily.

The protein resides in the cell inner membrane. Functionally, essential cell division protein. In Geobacter sp. (strain M21), this protein is Cell division protein FtsQ.